Reading from the N-terminus, the 198-residue chain is Transcription factor IND (198 aa).

Residues 1-33 (MENGMYKKKGVCDSCVSSKSRSNHSPKRSMMEP) are disordered. The 50-residue stretch at 118 to 167 (ISDDPQTVVARRRRERISEKIRILKRIVPGGAKMDTASMLDEAIRYTKFL) folds into the bHLH domain.

In terms of assembly, homodimer. Heterodimer; possibly with ALC. In terms of tissue distribution, after fertilization, it is expressed in stripes about four cells wide at the margins of developing wild-type fruit. Also expressed in the inner valve layer, which becomes lignified later in fruit development. Detected in roots.

Its subcellular location is the nucleus. In terms of biological role, transcription regulator required for seed dispersal. Involved in the differentiation of all three cell types required for fruit dehiscence. Acts as the key regulator in a network including SHP and ALC that controls specification of the valve margin. Works with ALC, SHP, and FUL to allow differentiation of the lignified valve layer, the spring-loaded mechanism of fruit that promotes opening. Regulates the expression of the YJ80 marker. The sequence is that of Transcription factor IND (IND) from Arabidopsis thaliana (Mouse-ear cress).